A 251-amino-acid chain; its full sequence is Probable transcriptional regulatory protein MMAR_2098 (251 aa).

It belongs to the TACO1 family.

Its subcellular location is the cytoplasm. This chain is Probable transcriptional regulatory protein MMAR_2098, found in Mycobacterium marinum (strain ATCC BAA-535 / M).